The chain runs to 359 residues: 4-hydroxy-3-methylbut-2-en-1-yl diphosphate synthase (flavodoxin) (359 aa).

4 residues coordinate [4Fe-4S] cluster: Cys-264, Cys-267, Cys-299, and Glu-306.

It belongs to the IspG family. [4Fe-4S] cluster is required as a cofactor.

It carries out the reaction (2E)-4-hydroxy-3-methylbut-2-enyl diphosphate + oxidized [flavodoxin] + H2O + 2 H(+) = 2-C-methyl-D-erythritol 2,4-cyclic diphosphate + reduced [flavodoxin]. It participates in isoprenoid biosynthesis; isopentenyl diphosphate biosynthesis via DXP pathway; isopentenyl diphosphate from 1-deoxy-D-xylulose 5-phosphate: step 5/6. Converts 2C-methyl-D-erythritol 2,4-cyclodiphosphate (ME-2,4cPP) into 1-hydroxy-2-methyl-2-(E)-butenyl 4-diphosphate. This chain is 4-hydroxy-3-methylbut-2-en-1-yl diphosphate synthase (flavodoxin), found in Helicobacter pylori (strain Shi470).